The primary structure comprises 442 residues: tRNA modification GTPase MnmE (442 aa).

Arg22, Glu79, and Lys119 together coordinate (6S)-5-formyl-5,6,7,8-tetrahydrofolate. One can recognise a TrmE-type G domain in the interval 216–366; sequence GIKTCLVGAP…LLEKIKSIFA (151 aa). Asn226 contributes to the K(+) binding site. Residues 226-231, 245-251, and 270-273 each bind GTP; these read NSGKSS, SEIPGTT, and DTAG. Ser230 is a Mg(2+) binding site. 3 residues coordinate K(+): Ser245, Ile247, and Thr250. Thr251 is a binding site for Mg(2+). Residue Lys442 participates in (6S)-5-formyl-5,6,7,8-tetrahydrofolate binding.

This sequence belongs to the TRAFAC class TrmE-Era-EngA-EngB-Septin-like GTPase superfamily. TrmE GTPase family. In terms of assembly, homodimer. Heterotetramer of two MnmE and two MnmG subunits. K(+) serves as cofactor.

The protein resides in the cytoplasm. Its function is as follows. Exhibits a very high intrinsic GTPase hydrolysis rate. Involved in the addition of a carboxymethylaminomethyl (cmnm) group at the wobble position (U34) of certain tRNAs, forming tRNA-cmnm(5)s(2)U34. This chain is tRNA modification GTPase MnmE, found in Mesomycoplasma hyopneumoniae (strain 232) (Mycoplasma hyopneumoniae).